We begin with the raw amino-acid sequence, 159 residues long: Phosphopantetheine adenylyltransferase (159 aa).

Thr10 contributes to the substrate binding site. ATP contacts are provided by residues 10-11 (TF) and His18. 3 residues coordinate substrate: Lys42, Leu74, and Arg88. ATP is bound by residues 89–91 (GLR), Glu99, and 124–130 (NAFISSS).

The protein belongs to the bacterial CoaD family. In terms of assembly, homohexamer. Mg(2+) serves as cofactor.

The protein resides in the cytoplasm. The enzyme catalyses (R)-4'-phosphopantetheine + ATP + H(+) = 3'-dephospho-CoA + diphosphate. Its pathway is cofactor biosynthesis; coenzyme A biosynthesis; CoA from (R)-pantothenate: step 4/5. In terms of biological role, reversibly transfers an adenylyl group from ATP to 4'-phosphopantetheine, yielding dephospho-CoA (dPCoA) and pyrophosphate. The protein is Phosphopantetheine adenylyltransferase of Campylobacter fetus subsp. fetus (strain 82-40).